Consider the following 881-residue polypeptide: Protein translocase subunit SecA (881 aa).

ATP is bound by residues Q83, 101 to 105 (GEGKT), and D492.

The protein belongs to the SecA family.

The protein resides in the plastid. It is found in the chloroplast stroma. Its subcellular location is the chloroplast thylakoid membrane. It carries out the reaction ATP + H2O + cellular proteinSide 1 = ADP + phosphate + cellular proteinSide 2.. Has a central role in coupling the hydrolysis of ATP to the transfer of proteins across the thylakoid membrane. The chain is Protein translocase subunit SecA from Emiliania huxleyi (Coccolithophore).